A 201-amino-acid polypeptide reads, in one-letter code: Flagellin B1 (201 aa).

Residues 1–11 (MFEQNDDRDRG) constitute a propeptide that is removed on maturation.

It belongs to the archaeal flagellin family.

It localises to the archaeal flagellum. Its function is as follows. Flagellin is the subunit protein which polymerizes to form the filaments of archaeal flagella. The protein is Flagellin B1 (flaB1) of Natrialba magadii (strain ATCC 43099 / DSM 3394 / CCM 3739 / CIP 104546 / IAM 13178 / JCM 8861 / NBRC 102185 / NCIMB 2190 / MS3) (Natronobacterium magadii).